The following is an 807-amino-acid chain: Microbial collagenase (807 aa).

Positions 1 to 27 are cleaved as a signal peptide; that stretch reads MSHLLPFPRRRLALACLLASISGASFG. Zn(2+) is bound at residue His-434. The active site involves Glu-435. Zn(2+) is bound at residue His-438. The interval 562–585 is disordered; that stretch reads EVTPENPDTDPDTPTEPSDGVTQL.

It belongs to the peptidase M9A family. The cofactor is Zn(2+).

It localises to the secreted. The enzyme catalyses Digestion of native collagen in the triple helical region at Xaa-|-Gly bonds. With synthetic peptides, a preference is shown for Gly at P3 and P1', Pro and Ala at P2 and P2', and hydroxyproline, Ala or Arg at P3'.. In terms of biological role, possesses gelatinolytic activity. The chain is Microbial collagenase from Vibrio vulnificus (strain CMCP6).